Consider the following 66-residue polypeptide: Large ribosomal subunit protein uL29 (66 aa).

Belongs to the universal ribosomal protein uL29 family. Part of the 50S ribosomal subunit.

The sequence is that of Large ribosomal subunit protein uL29 (rpmC) from Bacillus subtilis (strain 168).